Consider the following 313-residue polypeptide: Porphobilinogen deaminase (313 aa).

Cysteine 242 bears the S-(dipyrrolylmethanemethyl)cysteine mark.

The protein belongs to the HMBS family. In terms of assembly, monomer. The cofactor is dipyrromethane.

It catalyses the reaction 4 porphobilinogen + H2O = hydroxymethylbilane + 4 NH4(+). It participates in porphyrin-containing compound metabolism; protoporphyrin-IX biosynthesis; coproporphyrinogen-III from 5-aminolevulinate: step 2/4. Tetrapolymerization of the monopyrrole PBG into the hydroxymethylbilane pre-uroporphyrinogen in several discrete steps. This is Porphobilinogen deaminase from Pseudomonas syringae pv. tomato (strain ATCC BAA-871 / DC3000).